Reading from the N-terminus, the 645-residue chain is Translation factor GUF1, mitochondrial (645 aa).

The region spanning 44–228 (ENYRNFSIVA…AIIDRIPPPT (185 aa)) is the tr-type G domain. GTP contacts are provided by residues 53 to 60 (AHVDHGKS), 120 to 124 (DTPGH), and 174 to 177 (NKID).

Belongs to the TRAFAC class translation factor GTPase superfamily. Classic translation factor GTPase family. LepA subfamily.

Its subcellular location is the mitochondrion inner membrane. It carries out the reaction GTP + H2O = GDP + phosphate + H(+). Promotes mitochondrial protein synthesis. May act as a fidelity factor of the translation reaction, by catalyzing a one-codon backward translocation of tRNAs on improperly translocated ribosomes. Binds to mitochondrial ribosomes in a GTP-dependent manner. This is Translation factor GUF1, mitochondrial from Saccharomyces cerevisiae (strain ATCC 204508 / S288c) (Baker's yeast).